The following is a 390-amino-acid chain: Phosphoglycerate kinase (390 aa).

Substrate is bound by residues 21 to 23 (DLN), R36, 59 to 62 (HLGR), R112, and R145. ATP-binding positions include K196, E317, and 343-346 (GGDT).

Belongs to the phosphoglycerate kinase family. In terms of assembly, monomer.

The protein resides in the cytoplasm. It catalyses the reaction (2R)-3-phosphoglycerate + ATP = (2R)-3-phospho-glyceroyl phosphate + ADP. It functions in the pathway carbohydrate degradation; glycolysis; pyruvate from D-glyceraldehyde 3-phosphate: step 2/5. This is Phosphoglycerate kinase from Cellvibrio japonicus (strain Ueda107) (Pseudomonas fluorescens subsp. cellulosa).